Reading from the N-terminus, the 110-residue chain is UPF0122 protein SaurJH9_1295 (110 aa).

It belongs to the UPF0122 family.

Might take part in the signal recognition particle (SRP) pathway. This is inferred from the conservation of its genetic proximity to ftsY/ffh. May be a regulatory protein. This Staphylococcus aureus (strain JH9) protein is UPF0122 protein SaurJH9_1295.